Here is a 255-residue protein sequence, read N- to C-terminus: Aliphatic sulfonates import ATP-binding protein SsuB (255 aa).

In terms of domain architecture, ABC transporter spans 12–233 (LLLNAVSKHY…RLGSVRLAEL (222 aa)). 44-51 (GRSGGGKS) contributes to the ATP binding site.

Belongs to the ABC transporter superfamily. Aliphatic sulfonates importer (TC 3.A.1.17.2) family. The complex is composed of two ATP-binding proteins (SsuB), two transmembrane proteins (SsuC) and a solute-binding protein (SsuA).

The protein localises to the cell inner membrane. The catalysed reaction is ATP + H2O + aliphatic sulfonate-[sulfonate-binding protein]Side 1 = ADP + phosphate + aliphatic sulfonateSide 2 + [sulfonate-binding protein]Side 1.. Part of the ABC transporter complex SsuABC involved in aliphatic sulfonates import. Responsible for energy coupling to the transport system. The polypeptide is Aliphatic sulfonates import ATP-binding protein SsuB (Escherichia coli O6:K15:H31 (strain 536 / UPEC)).